An 880-amino-acid chain; its full sequence is Alanine--tRNA ligase (880 aa).

4 residues coordinate Zn(2+): His-568, His-572, Cys-670, and His-674.

Belongs to the class-II aminoacyl-tRNA synthetase family. It depends on Zn(2+) as a cofactor.

It localises to the cytoplasm. It catalyses the reaction tRNA(Ala) + L-alanine + ATP = L-alanyl-tRNA(Ala) + AMP + diphosphate. Functionally, catalyzes the attachment of alanine to tRNA(Ala) in a two-step reaction: alanine is first activated by ATP to form Ala-AMP and then transferred to the acceptor end of tRNA(Ala). Also edits incorrectly charged Ser-tRNA(Ala) and Gly-tRNA(Ala) via its editing domain. The chain is Alanine--tRNA ligase from Exiguobacterium sibiricum (strain DSM 17290 / CCUG 55495 / CIP 109462 / JCM 13490 / 255-15).